Here is a 335-residue protein sequence, read N- to C-terminus: 2-acylglycerol O-acyltransferase 1 (335 aa).

The next 2 membrane-spanning stretches (helical) occupy residues 24–44 (WVLSFLLLVQVCIGIMVMLVL) and 104–124 (YIFGFHPHGIFVPGAFGNFCT). Residue N180 is glycosylated (N-linked (GlcNAc...) asparagine).

The protein belongs to the diacylglycerol acyltransferase family. Expressed at high level in kidney and stomach. Expressed at lower level in brown and white adipose tissue, uterus and liver. Not detected in small intestine.

It localises to the endoplasmic reticulum membrane. It catalyses the reaction a 2-acylglycerol + an acyl-CoA = a 1,2-diacylglycerol + CoA. The enzyme catalyses 2-(9Z-octadecenoyl)-glycerol + butanoyl-CoA = 1-butanoyl-2-(9Z-octadecenoyl)-glycerol + CoA. The catalysed reaction is 2-(9Z-octadecenoyl)-glycerol + octanoyl-CoA = 1-octanoyl-2-(9Z-octadecenoyl)-glycerol + CoA. It carries out the reaction 2-(9Z-octadecenoyl)-glycerol + dodecanoyl-CoA = 1-dodecanoyl-2-(9Z-octadecenoyl)-glycerol + CoA. It catalyses the reaction 2-(9Z-octadecenoyl)-glycerol + tetradecanoyl-CoA = 1-tetradecanoyl-2-(9Z-octadecenoyl)-glycerol + CoA. The enzyme catalyses 2-(9Z-octadecenoyl)-glycerol + hexadecanoyl-CoA = 1-hexadecanoyl-2-(9Z-octadecenoyl)-glycerol + CoA. The catalysed reaction is 2-(9Z-octadecenoyl)-glycerol + octadecanoyl-CoA = 1-octadecanoyl-2-(9Z-octadecenoyl)-glycerol + CoA. It carries out the reaction eicosanoyl-CoA + 2-(9Z-octadecenoyl)-glycerol = 1-eicosanoyl-2-(9Z-octadecenoyl)-glycerol + CoA. It catalyses the reaction 2-(9Z-octadecenoyl)-glycerol + (9Z)-octadecenoyl-CoA = 1,2-di-(9Z-octadecenoyl)-glycerol + CoA. The enzyme catalyses 2-(9Z-octadecenoyl)-glycerol + (9Z,12Z)-octadecadienoyl-CoA = 1-(9Z,12Z-octadecadienoyl)-2-(9Z-octadecenoyl)-glycerol + CoA. The catalysed reaction is 2-(9Z-octadecenoyl)-glycerol + (5Z,8Z,11Z,14Z)-eicosatetraenoyl-CoA = 1-(5Z,8Z,11Z,14Z-eicosatetraenoyl)-2-(9Z-octadecenoyl)-glycerol + CoA. It carries out the reaction a 2-acylglycerol + an acyl-CoA = a 1,2-diacyl-sn-glycerol + CoA. It catalyses the reaction a 2-acylglycerol + an acyl-CoA = a 2,3-diacyl-sn-glycerol + CoA. The enzyme catalyses a 1-acylglycerol + an acyl-CoA = a 1,2-diacylglycerol + CoA. The catalysed reaction is 1-dodecanoylglycerol + (9Z)-octadecenoyl-CoA = 1-dodecanoyl-2-(9Z-octadecenoyl)-glycerol + CoA. It carries out the reaction 1-tetradecanoylglycerol + (9Z)-octadecenoyl-CoA = 1-tetradecanoyl-2-(9Z-octadecenoyl)-glycerol + CoA. It catalyses the reaction 1-hexadecanoylglycerol + (9Z)-octadecenoyl-CoA = 1-hexadecanoyl-2-(9Z-octadecenoyl)-glycerol + CoA. The enzyme catalyses 1-(9Z-octadecenoyl)-glycerol + (9Z)-octadecenoyl-CoA = 1,2-di-(9Z-octadecenoyl)-glycerol + CoA. The catalysed reaction is 1-(9Z,12Z-octadecadienoyl)-glycerol + (9Z)-octadecenoyl-CoA = 1-(9Z,12Z-octadecadienoyl)-2-(9Z-octadecenoyl)-glycerol + CoA. It carries out the reaction 1-(9Z,12Z,15Z-octadecatrienoyl)-glycerol + (9Z)-octadecenoyl-CoA = 1-(9Z,12Z,15Z-octadecatrienoyl)-2-(9Z-octadecenoyl)-glycerol + CoA. It catalyses the reaction 1-(5Z,8Z,11Z,14Z-eicosatetraenoyl)-glycerol + (9Z)-octadecenoyl-CoA = 1-(5Z,8Z,11Z,14Z-eicosatetraenoyl)-2-(9Z-octadecenoyl)-glycerol + CoA. The enzyme catalyses a 1-acylglycerol + an acyl-CoA = a 1,3-diacylglycerol + CoA. The catalysed reaction is 1-dodecanoylglycerol + (9Z)-octadecenoyl-CoA = 1-dodecanoyl-3-(9Z-octadecenoyl)-glycerol + CoA. It carries out the reaction 1-hexadecanoylglycerol + (9Z)-octadecenoyl-CoA = 1-(9Z-octadecenoyl)-3-hexadecanoylglycerol + CoA. It catalyses the reaction 1-octadecanoylglycerol + (9Z)-octadecenoyl-CoA = 1-octadecanoyl-3-(9Z-octadecenoyl)-glycerol + CoA. The enzyme catalyses 1-(9Z-octadecenoyl)-sn-glycerol + (9Z)-octadecenoyl-CoA = 1,3-di-(9Z-octadecenoyl)-glycerol + CoA. The catalysed reaction is 1-(9Z,12Z-octadecadienoyl)-glycerol + (9Z)-octadecenoyl-CoA = 1-(9Z-octadecenoyl)-3-(9Z,12Z-octadecadienoyl)-glycerol + CoA. It carries out the reaction 1-(9Z,12Z,15Z-octadecatrienoyl)-glycerol + (9Z)-octadecenoyl-CoA = 1-(9Z,12Z,15Z-octadecatrienoyl)-3-(9Z-octadecenoyl)-glycerol + CoA. It catalyses the reaction a 1-acyl-sn-glycerol + an acyl-CoA = a 1,3-diacyl-sn-glycerol + CoA. The enzyme catalyses a 3-acyl-sn-glycerol + an acyl-CoA = a 1,3-diacyl-sn-glycerol + CoA. The catalysed reaction is 3-octadecanoyl-sn-glycerol + (9Z)-octadecenoyl-CoA = 1-(9Z-octadecenoyl)-3-octadecanoyl-sn-glycerol + CoA. It functions in the pathway glycerolipid metabolism; triacylglycerol biosynthesis. Functionally, involved in glycerolipid synthesis and lipid metabolism. Catalyzes the formation of diacylglycerol, the precursor of triacylglycerol, by transferring the acyl chain of a fatty acyl-CoA to a monoacylglycerol, mainly at the sn-1 or sn-3 positions. It uses both sn-2-monoacylglycerol (2-acylglycerol) and sn-1-monoacylglycerol (1-acyl-sn-glycerol) equally well as substrates, and uses sn-3-monoacylglycerol (3-acyl-sn-glycerol) with lower efficiency. Probably not involved in absorption of dietary fat in the small intestine. In Mus musculus (Mouse), this protein is 2-acylglycerol O-acyltransferase 1.